Here is a 908-residue protein sequence, read N- to C-terminus: Transcriptional repressor ILP1 (908 aa).

Disordered regions lie at residues 1–113 and 238–277; these read MGSN…PQAG and VGPR…EEDK. The segment covering 25-47 has biased composition (low complexity); that stretch reads ATPSSKPTSTLSSSKPKTLSASA. Residues 426 to 453 are a coiled coil; the sequence is MQNKGSLIEEIEDQMKELNEKHALSILE. Over residues 513–530 the composition is skewed to basic and acidic residues; it reads EFGRDENLQKRREVEQRA. A disordered region spans residues 513-574; sequence EFGRDENLQK…ESDTETSAYK (62 aa).

It belongs to the GCF family. In terms of assembly, interacts with STIPL1/NTR1.

It is found in the nucleus. Its function is as follows. Transcriptional repressor regulating endoreduplication through control of A-type cyclins expression. Does not bind to promoter sequences (in vitro) and may act by interacting with tissue-specific transcription factors. Enhances the endocycle in endoreduplicating cells in seedlings. Required for efficient splicing. This is Transcriptional repressor ILP1 from Arabidopsis thaliana (Mouse-ear cress).